Consider the following 467-residue polypeptide: F-box/kelch-repeat protein SKIP11 (467 aa).

Residues 77–117 (LSGGEEQADAAIGDGSSSRQEQEQQSDFNDNGGDSSDSHSL) are disordered. The segment covering 92 to 111 (SSSRQEQEQQSDFNDNGGDS) has biased composition (low complexity). In terms of domain architecture, F-box spans 116–163 (SLINEIGRDNSIDCLIRCSRSDYGSIASLNRNFRSLVKSGEIYRLRRQ). Kelch repeat units lie at residues 159-210 (RLRR…KESL), 215-259 (DLLV…SLGE), 261-307 (AIFA…FMDG), 308-356 (KFYV…DMSP), and 365-411 (AVVN…GLAF).

In terms of assembly, part of a SCF (ASK-cullin-F-box) protein ligase complex. Interacts with SKP1A/ASK1 and SPK1B/ASK2.

It is found in the nucleus. It participates in protein modification; protein ubiquitination. Its function is as follows. Component of SCF(ASK-cullin-F-box) E3 ubiquitin ligase complexes, which may mediate the ubiquitination and subsequent proteasomal degradation of target proteins. This Arabidopsis thaliana (Mouse-ear cress) protein is F-box/kelch-repeat protein SKIP11 (SKIP11).